A 434-amino-acid chain; its full sequence is MSFLIPNRGVGGTKIPLSIIVLVLCGFMFFILLYTERISLLSSSSSSSSSFFKLKSCPRKDVSSKPKEKIRKERSEILEVLDDRFEFDPEECNVAAGKWVYNSSIEPLYTDRSCPYIDRQFSCMKNGQPETDYLRWEWQPDDCTIPRFSPKLAMNKLRGKRLLFVGDSLQRSQWESFVCLVESIIPEGEKSMKRSQKYFVFKAKEYNATIEFYWAPYIVESNTDIPVISDPKKRIVKVDSVKDRAKFWEGADILVFNTYVWWMSGLRMKALWGSFGNGESGAEALDTQVAYRLGLKTWANWVDSTVDPNKTRVFFTTMSPTHTRSADWGKPNGTKCFNETKPIKDKKFWGTGSNKQMMKVVSSVIKHMTTHVTVINITQLSEYRIDAHTSVYTETGGKILTAEQRADPMHHADCIHWCLPGLPDTWNRILLAHL.

The chain crosses the membrane as a helical; Signal-anchor for type II membrane protein span at residues 15–35 (IPLSIIVLVLCGFMFFILLYT). Positions 166–168 (GDS) match the GDS motif motif. Positions 413–427 (DCIHWCLPGLPDTWN) match the DCXHWCLPGXXDXWN motif motif.

Belongs to the PC-esterase family. TBL subfamily.

The protein localises to the golgi apparatus membrane. Involved in secondary cell wall cellulose deposition. Required for normal stem development. May act as a bridging protein that binds pectin and other cell wall polysaccharides. Probably involved in maintaining esterification of pectins. May be involved in the specific O-acetylation of cell wall polymers. The sequence is that of Protein trichome birefringence-like 3 (TBL3) from Arabidopsis thaliana (Mouse-ear cress).